Reading from the N-terminus, the 262-residue chain is 5'-nucleotidase SurE (262 aa).

A divalent metal cation contacts are provided by D11, D12, S43, and N101.

The protein belongs to the SurE nucleotidase family. The cofactor is a divalent metal cation.

The protein resides in the cytoplasm. It catalyses the reaction a ribonucleoside 5'-phosphate + H2O = a ribonucleoside + phosphate. Its function is as follows. Nucleotidase that shows phosphatase activity on nucleoside 5'-monophosphates. The protein is 5'-nucleotidase SurE of Prochlorococcus marinus (strain NATL2A).